Reading from the N-terminus, the 791-residue chain is Diacylglycerol kinase gamma (791 aa).

2 disordered regions span residues 82-103 (KPRHETSDHPTEGASNSEANSA) and 117-154 (DEACAPDTESNMAEKQAPAEDQVAATPLEPPVPRSSSS). Residues 83 to 92 (PRHETSDHPT) are compositionally biased toward basic and acidic residues. The span at 94–103 (GASNSEANSA) shows a compositional bias: polar residues. EF-hand domains are found at residues 175-210 (RPQDKLEFMFRLYDSDENGLLDQAEMDCIVNQMLHI) and 220-255 (ELRPILKEMLQGMDYDRDGFVSLQEWVHGGMTTIPL). The Ca(2+) site is built by D188, D190, N192, E199, D233, D235, D237, and E244. Phorbol-ester/DAG-type zinc fingers lie at residues 271–321 (RHAW…IPGC) and 336–385 (QHAW…LCDG). Residues 430 to 564 (PGTHPLLVLV…LDRWHLEVIP (135 aa)) form the DAGKc domain. Residues 768 to 791 (APMMMGPPQKSSFFSLRRKSRSKD) are disordered.

Belongs to the eukaryotic diacylglycerol kinase family. As to expression, predominantly expressed in retina and in a much lesser extent in the brain. Other tissues contain extremely low levels of DGK-gamma.

The protein localises to the membrane. Its subcellular location is the cytoplasm. It localises to the cytosol. The protein resides in the cytoskeleton. It carries out the reaction a 1,2-diacyl-sn-glycerol + ATP = a 1,2-diacyl-sn-glycero-3-phosphate + ADP + H(+). The catalysed reaction is 1,2-didecanoyl-sn-glycerol + ATP = 1,2-didecanoyl-sn-glycero-3-phosphate + ADP + H(+). The enzyme catalyses 1-octadecanoyl-2-(5Z,8Z,11Z,14Z-eicosatetraenoyl)-sn-glycerol + ATP = 1-octadecanoyl-2-(5Z,8Z,11Z,14Z-eicosatetraenoyl)-sn-glycero-3-phosphate + ADP + H(+). It catalyses the reaction 1,2-di-(9Z-octadecenoyl)-sn-glycerol + ATP = 1,2-di-(9Z-octadecenoyl)-sn-glycero-3-phosphate + ADP + H(+). It carries out the reaction 1-octadecanoyl-2-(9Z,12Z)-octadecadienoyl-sn-glycerol + ATP = 1-octadecanoyl-2-(9Z,12Z-octadecadienoyl)-sn-glycero-3-phosphate + ADP + H(+). The protein operates within lipid metabolism; glycerolipid metabolism. With respect to regulation, the activity is calcium-dependent. Requires phosphatidylserine for maximal activity. Its function is as follows. Diacylglycerol kinase that converts diacylglycerol/DAG into phosphatidic acid/phosphatidate/PA and regulates the respective levels of these two bioactive lipids. Thereby, acts as a central switch between the signaling pathways activated by these second messengers with different cellular targets and opposite effects in numerous biological processes. Has no apparent specificity with regard to the acyl compositions of diacylglycerol. Specifically expressed in the cerebellum where it controls the level of diacylglycerol which in turn regulates the activity of protein kinase C gamma. Through protein kinase C gamma, indirectly regulates the dendritic development of Purkinje cells, cerebellar long term depression and ultimately cerebellar motor coordination. The chain is Diacylglycerol kinase gamma (DGKG) from Homo sapiens (Human).